Reading from the N-terminus, the 364-residue chain is MAIDPYRHLLRPLLFSGLQADPELLHQQFLSLCGWLNQDRSLCTWLRQQLQQWYALSDPRLERQVWGLRFPNPIGLAAGFDKNGVARSVWSAFGFGFAELGTVTWHPQPGNPRPRLFRLGSDRAVINRMGFNNAGAEAMAASLERSPPASIPIGINLGKSKITPLAAAKEDYLASFRRLHPLGDYFVINVSSPNTPGLRDLQAKEQLAPILETLQSANHPRKPLLLKIAPDLSWEQIAAILDLVQAYELAGIVATNTTVAREGLKSQTIPQTGRSPAEEAGGLSGAPLRQRATAVIRFIHEQTQGTLPIIGVGGIFTPEDVIEKLAAGATLVQLYTGWIYQGPSLLRELLKGLLAAADQETPEK.

Residues 78-82 and threonine 102 each bind FMN; that span reads AGFDK. Lysine 82 is a substrate binding site. 127-131 contacts substrate; sequence NRMGF. Asparagine 156 and asparagine 189 together coordinate FMN. Residue asparagine 189 coordinates substrate. Serine 192 serves as the catalytic Nucleophile. Substrate is bound at residue asparagine 194. FMN is bound by residues lysine 227 and threonine 255. 256–257 is a binding site for substrate; sequence NT. Residues glycine 285, glycine 314, and 335-336 contribute to the FMN site; that span reads YT.

The protein belongs to the dihydroorotate dehydrogenase family. Type 2 subfamily. Monomer. The cofactor is FMN.

The protein localises to the cell membrane. The catalysed reaction is (S)-dihydroorotate + a quinone = orotate + a quinol. It participates in pyrimidine metabolism; UMP biosynthesis via de novo pathway; orotate from (S)-dihydroorotate (quinone route): step 1/1. Catalyzes the conversion of dihydroorotate to orotate with quinone as electron acceptor. This chain is Dihydroorotate dehydrogenase (quinone), found in Thermosynechococcus vestitus (strain NIES-2133 / IAM M-273 / BP-1).